Reading from the N-terminus, the 1355-residue chain is Probable major glycoprotein (1355 aa).

A signal peptide spans 1–16; it reads MKKTMLAIILIPLVYA. 21 N-linked (GlcNAc...) asparagine; by host glycosylation sites follow: asparagine 81, asparagine 112, asparagine 129, asparagine 169, asparagine 173, asparagine 192, asparagine 542, asparagine 655, asparagine 682, asparagine 744, asparagine 780, asparagine 811, asparagine 815, asparagine 860, asparagine 865, asparagine 882, asparagine 895, asparagine 1213, asparagine 1225, asparagine 1267, and asparagine 1274. Residues 1245–1299 are a coiled coil; sequence QIVSMEMEIQDLKLELIQLQKINTSVHMENITGDIDAMKATIEEYRAEMAKLRVT. A helical membrane pass occupies residues 1308 to 1328; sequence FIYAILGVIAIGALIAIIFMA.

Its subcellular location is the host membrane. The chain is Probable major glycoprotein (ORF46) from Ictaluridae (bullhead catfishes).